The following is a 1031-amino-acid chain: Putative protein TIC 214 N-terminal part (1031 aa).

The next 6 membrane-spanning stretches (helical) occupy residues 11-31 (ILWA…LFGL), 68-88 (TLGQ…IMLL), 92-112 (AITL…KDLS), 127-147 (GIIQ…ILLP), 166-186 (SFFV…LINL), and 212-232 (TFSI…PVPF).

The protein belongs to the TIC214 family. Part of the Tic complex.

The protein localises to the plastid. The protein resides in the chloroplast inner membrane. In terms of biological role, involved in protein precursor import into chloroplasts. May be part of an intermediate translocation complex acting as a protein-conducting channel at the inner envelope. This is Putative protein TIC 214 N-terminal part from Anthoceros angustus (Hornwort).